The following is a 160-amino-acid chain: Sulfur-rich protein (160 aa).

2 helical membrane-spanning segments follow: residues 63–83 (ITMIVLGIILLIAGLALTFVL) and 92–112 (FLFLIPAVIGLVKLLATSVFM).

Its subcellular location is the membrane. The sequence is that of Sulfur-rich protein (srp) from Chlamydia abortus (strain DSM 27085 / S26/3) (Chlamydophila abortus).